The primary structure comprises 176 residues: Inner membrane-spanning protein YciB (176 aa).

5 helical membrane-spanning segments follow: residues 3 to 23 (FLFD…WGIF), 49 to 69 (TMLW…LVLH), 72 to 92 (KFIQ…LVAA), 118 to 138 (KLNL…LYVV), and 149 to 169 (FKLF…SLWL).

It belongs to the YciB family.

It is found in the cell inner membrane. Functionally, plays a role in cell envelope biogenesis, maintenance of cell envelope integrity and membrane homeostasis. This chain is Inner membrane-spanning protein YciB, found in Burkholderia mallei (strain NCTC 10247).